Here is a 530-residue protein sequence, read N- to C-terminus: Equilibrative nucleoside transporter 4 (530 aa).

The interval 1–21 (MGSVGSQRLEEPSVAGTPDPG) is disordered. At 1–68 (MGSVGSQRLE…DEPVPDDRYH (68 aa)) the chain is on the extracellular side. A helical membrane pass occupies residues 69-89 (AIYFAMLLAGVGFLLPYNSFI). The Cytoplasmic portion of the chain corresponds to 90–101 (TDVDYLHHKYPG). Residues 102–122 (TSIVFDMSLTYILVALAAVLL) traverse the membrane as a helical segment. The Extracellular segment spans residues 123 to 139 (NNVLVERLTLHTRITAG). The chain crosses the membrane as a helical span at residues 140 to 160 (YLLALGPLLFISICDVWLQLF). The Cytoplasmic portion of the chain corresponds to 161–166 (SRDQAY). Residues 167–187 (AINLAAVGTVAFGCTVQQSSF) traverse the membrane as a helical segment. Over 188–231 (YGYTGMLPKRYTQGVMTGESTAGVMISLSRILTKLLLPDERAST) the chain is Extracellular. A helical transmembrane segment spans residues 232-252 (LIFFLVSVALELLCFLLHLLV). Residues 253–351 (RRSRFVLFYT…LLLHRYVVAR (99 aa)) are Cytoplasmic-facing. A helical transmembrane segment spans residues 352 to 372 (VIWADMLSIAVTYFITLCLFP). The Extracellular portion of the chain corresponds to 373 to 381 (GLESEIRHC). The helical transmembrane segment at 382 to 402 (ILGEWLPILIMAVFNLSDFVG) threads the bilayer. Residues 403 to 416 (KILAALPVDWRGTH) lie on the Cytoplasmic side of the membrane. Residues 417-437 (LLACSCLRVVFIPLFILCVYP) form a helical membrane-spanning segment. Residues 438–450 (SGMPALRHPAWPC) are Extracellular-facing. The helical transmembrane segment at 451 to 471 (IFSLLMGISNGYFGSVPMILA) threads the bilayer. Topologically, residues 472 to 486 (AGKVSPKQRELAGNT) are cytoplasmic. Residues 487–509 (MTVSYMSGLTLGSAVAYCTYSLT) traverse the membrane as a helical segment. The Extracellular portion of the chain corresponds to 510 to 530 (RDAHGSCLHASTANGSILAGL). Residue N523 is glycosylated (N-linked (GlcNAc...) asparagine).

This sequence belongs to the SLC29A/ENT transporter (TC 2.A.57) family. In terms of processing, N-glycosylated. As to expression, mainly expressed in brain and skeletal muscle. In brain, expressed in cerebellum, cerebral cortex, medulla oblongata, occipital pole, frontal and temporal lobes putamen, spinal cord, substancia nigra, hippocampus, caudate nucleus, nucleus accumbens, pons and choroid plexus. Expressed in heart, in both cardiomyocytes and vascular endothelial cells. Also expressed in adrenal gland, small intestine, pancreas, kidney, liver, bone marrow, lymph node. Located in endometrial stroma, where the expression is high in the proliferative phase, decreases during the secretory phase, and is no longer detectable in the menstrual phase.

Its subcellular location is the cell membrane. The protein resides in the apical cell membrane. It catalyses the reaction serotonin(out) = serotonin(in). It carries out the reaction dopamine(out) = dopamine(in). The enzyme catalyses (R)-noradrenaline(out) = (R)-noradrenaline(in). The catalysed reaction is (R)-adrenaline(out) = (R)-adrenaline(in). It catalyses the reaction histamine(out) = histamine(in). It carries out the reaction tyramine(in) = tyramine(out). The enzyme catalyses guanidine(out) = guanidine(in). The catalysed reaction is adenosine(in) = adenosine(out). Activated at acidic pH. In terms of biological role, electrogenic voltage-dependent transporter that mediates the transport of a variety of endogenous bioactive amines, cationic xenobiotics and drugs. Utilizes the physiologic inside-negative membrane potential as a driving force to facilitate cellular uptake of organic cations. Functions as a Na(+)- and Cl(-)-independent bidirectional transporter. Substrate transport is pH-dependent and enhanced under acidic condition, which is most likely the result of allosteric changes in the transporter structure. Implicated in monoamine neurotransmitters uptake such as serotonin, dopamine, adrenaline/epinephrine, noradrenaline/norepinephrine, histamine and tyramine, thereby supporting a role in homeostatic regulation of aminergic neurotransmission in the central nervous system. Also responsible for the uptake of bioactive amines and drugs through the blood-cerebrospinal fluid (CSF) barrier, from the CSF into choroid plexus epithelial cells, thereby playing a significant role in the clearance of cationic neurotoxins, xenobiotics and metabolic waste in the brain. Involved in bidirectional transport of the purine nucleoside adenosine and plays a role in the regulation of extracellular adenosine concentrations in cardiac tissues, in particular during ischemia. May be involved in organic cation uptake from the tubular lumen into renal tubular cells, thereby contributing to organic cation reabsorption in the kidney. Also transports guanidine. This chain is Equilibrative nucleoside transporter 4, found in Homo sapiens (Human).